The primary structure comprises 82 residues: Large ribosomal subunit protein uL24c (82 aa).

This sequence belongs to the universal ribosomal protein uL24 family. As to quaternary structure, part of the 50S ribosomal subunit.

The protein resides in the plastid. It localises to the chloroplast. One of two assembly initiator proteins, it binds directly to the 5'-end of the 23S rRNA, where it nucleates assembly of the 50S subunit. The sequence is that of Large ribosomal subunit protein uL24c (rpl24) from Phaeodactylum tricornutum (strain CCAP 1055/1).